The primary structure comprises 419 residues: Peptide chain release factor subunit 1 (419 aa).

This sequence belongs to the eukaryotic release factor 1 family. In terms of assembly, heterodimer of two subunits, one of which binds GTP.

The protein localises to the cytoplasm. In terms of biological role, directs the termination of nascent peptide synthesis (translation) in response to the termination codons UAA, UAG and UGA. This chain is Peptide chain release factor subunit 1, found in Methanococcus maripaludis (strain C7 / ATCC BAA-1331).